Here is a 461-residue protein sequence, read N- to C-terminus: 3-deoxy-D-manno-octulosonic acid transferase (461 aa).

A helical; Signal-anchor transmembrane segment spans residues 2–22 (MLLYYTLSFILLPVYFIIIFI). An RPE1 insert domain is found at 47-88 (SALDFIQMSVNKEGFTDHKTTSYVDMHRNASLMYKLSLERSY). The active-site Proton acceptor is glutamate 102. Residues 306–307 (PR), 347–349 (FGE), and 372–375 (NILE) contribute to the CMP site.

It belongs to the glycosyltransferase group 1 family. Glycosyltransferase 30 subfamily.

The protein localises to the cell inner membrane. It catalyses the reaction lipid IVA (E. coli) + CMP-3-deoxy-beta-D-manno-octulosonate = alpha-Kdo-(2-&gt;6)-lipid IVA (E. coli) + CMP + H(+). The protein operates within bacterial outer membrane biogenesis; LPS core biosynthesis. Involved in lipopolysaccharide (LPS) biosynthesis. Catalyzes the transfer of 3-deoxy-D-manno-octulosonate (Kdo) residue(s) from CMP-Kdo to lipid IV(A), the tetraacyldisaccharide-1,4'-bisphosphate precursor of lipid A. This chain is 3-deoxy-D-manno-octulosonic acid transferase (waaA), found in Rickettsia prowazekii (strain Madrid E).